A 488-amino-acid chain; its full sequence is Aspartyl/glutamyl-tRNA(Asn/Gln) amidotransferase subunit B (488 aa).

This sequence belongs to the GatB/GatE family. GatB subfamily. As to quaternary structure, heterotrimer of A, B and C subunits.

The enzyme catalyses L-glutamyl-tRNA(Gln) + L-glutamine + ATP + H2O = L-glutaminyl-tRNA(Gln) + L-glutamate + ADP + phosphate + H(+). It catalyses the reaction L-aspartyl-tRNA(Asn) + L-glutamine + ATP + H2O = L-asparaginyl-tRNA(Asn) + L-glutamate + ADP + phosphate + 2 H(+). Functionally, allows the formation of correctly charged Asn-tRNA(Asn) or Gln-tRNA(Gln) through the transamidation of misacylated Asp-tRNA(Asn) or Glu-tRNA(Gln) in organisms which lack either or both of asparaginyl-tRNA or glutaminyl-tRNA synthetases. The reaction takes place in the presence of glutamine and ATP through an activated phospho-Asp-tRNA(Asn) or phospho-Glu-tRNA(Gln). The polypeptide is Aspartyl/glutamyl-tRNA(Asn/Gln) amidotransferase subunit B (Ralstonia pickettii (strain 12J)).